We begin with the raw amino-acid sequence, 201 residues long: UPF0056 membrane protein PYRAB13050 (201 aa).

Helical transmembrane passes span F8–F28, I49–F69, V73–S93, V111–M131, P140–G160, and L181–I201.

The protein belongs to the UPF0056 (MarC) family.

Its subcellular location is the cell membrane. This is UPF0056 membrane protein PYRAB13050 from Pyrococcus abyssi (strain GE5 / Orsay).